A 275-amino-acid polypeptide reads, in one-letter code: LIM/homeobox protein Awh (275 aa).

2 consecutive LIM zinc-binding domains span residues 6-67 and 68-129; these read RSCA…NFGA and KCSK…TVEG. The residue at position 126 (Thr-126) is a Phosphothreonine. Residues 148–207 constitute a DNA-binding region (homeobox); the sequence is TKRVRTTFTEEQLQVLQANFQIDSNPDGQDLERIASVTGLSKRVTQVWFQNSRARQKKHI. Positions 253–275 are disordered; the sequence is PTHESSMDELSQDSSVHCMPSEV.

In terms of tissue distribution, first detected in neuroblasts in stage 9 embryos. Expressed in all 10 abdominal segments and in the labial segment during early embryogenesis. Expressed in the stage 14 developing epithelium. By embryonic stage 16, expression is refined to the abdominal histoblasts and salivary gland imaginal ring cells. Expressed in both larval and imaginal cells between the salivary gland and the salivary gland imaginal ring, in late third instar larvae. Also expressed in specific areas of the larval wing, leg and eye-antennal disks.

It is found in the nucleus. Its function is as follows. Probable transcription factor. Required for the establishment of a subset of imaginal tissues: the abdominal histoblasts and the salivary gland imaginal rings. The protein is LIM/homeobox protein Awh of Drosophila melanogaster (Fruit fly).